Reading from the N-terminus, the 563-residue chain is Probable ganciclovir kinase (563 aa).

Positions 1 to 16 are enriched in polar residues; it reads MDNGVETPQGQKTQPI. A disordered region spans residues 1-33; the sequence is MDNGVETPQGQKTQPINLPPDRKRLRKHDGLGK. ATP contacts are provided by residues 202 to 210 and K219; that span reads LGVGAYGKV. D314 acts as the Proton acceptor in catalysis.

This sequence belongs to the protein kinase superfamily. Tyr protein kinase family. HCMV ganciclovir subfamily.

Its function is as follows. Phosphorylates the antiviral nucleoside analog ganciclovir. This is Probable ganciclovir kinase (U69) from Human herpesvirus 6B (strain Z29) (HHV-6 variant B).